Here is a 447-residue protein sequence, read N- to C-terminus: Chromosomal replication initiator protein DnaA (447 aa).

Residues 1–79 (MVSCENLWQQ…TGQEITVKLI (79 aa)) are domain I, interacts with DnaA modulators. Positions 79 to 105 (ITDGLEPHSLIGQESSLPMETTPKNAT) are domain II. The tract at residues 106–322 (ALNGKYTFSR…GALIRAIAYT (217 aa)) is domain III, AAA+ region. Residues Gly150, Gly152, Lys153, and Thr154 each contribute to the ATP site. The interval 323–447 (SLSNVAMTVE…INIAGQAPES (125 aa)) is domain IV, binds dsDNA.

This sequence belongs to the DnaA family. As to quaternary structure, oligomerizes as a right-handed, spiral filament on DNA at oriC.

It localises to the cytoplasm. Plays an essential role in the initiation and regulation of chromosomal replication. ATP-DnaA binds to the origin of replication (oriC) to initiate formation of the DNA replication initiation complex once per cell cycle. Binds the DnaA box (a 9 base pair repeat at the origin) and separates the double-stranded (ds)DNA. Forms a right-handed helical filament on oriC DNA; dsDNA binds to the exterior of the filament while single-stranded (ss)DNA is stabiized in the filament's interior. The ATP-DnaA-oriC complex binds and stabilizes one strand of the AT-rich DNA unwinding element (DUE), permitting loading of DNA polymerase. After initiation quickly degrades to an ADP-DnaA complex that is not apt for DNA replication. Binds acidic phospholipids. In terms of biological role, isolated domain IV (residues 348-447) binds both E.coli and B.subtilis oriC. This Synechocystis sp. (strain ATCC 27184 / PCC 6803 / Kazusa) protein is Chromosomal replication initiator protein DnaA.